A 121-amino-acid polypeptide reads, in one-letter code: MSDTASFRDTLEVFENPAPTRNFTIEHHCPEFTSVCPKTGQPDYGTIVFTYVPDRVCVELKSLKMYLQKFRNEGIFYEQVTNRILDDFVAVVQPRKVTVESKWTPRGGLNSNIIVTYPDEA.

Residue Cys36 is the Thioimide intermediate of the active site. The active-site Proton donor is Asp43. Substrate contacts are provided by residues 58–60 and 77–78; these read VEL and YE.

The protein belongs to the GTP cyclohydrolase I family. QueF type 1 subfamily.

It is found in the cytoplasm. The catalysed reaction is 7-aminomethyl-7-carbaguanine + 2 NADP(+) = 7-cyano-7-deazaguanine + 2 NADPH + 3 H(+). It functions in the pathway tRNA modification; tRNA-queuosine biosynthesis. Its function is as follows. Catalyzes the NADPH-dependent reduction of 7-cyano-7-deazaguanine (preQ0) to 7-aminomethyl-7-deazaguanine (preQ1). This is NADPH-dependent 7-cyano-7-deazaguanine reductase from Rhodopirellula baltica (strain DSM 10527 / NCIMB 13988 / SH1).